Consider the following 321-residue polypeptide: Cytochrome c biogenesis protein CcsA (321 aa).

8 consecutive transmembrane segments (helical) span residues Ile-9 to Leu-29, Gly-44 to Gly-64, Leu-71 to Phe-91, Phe-98 to Leu-118, Met-143 to Ile-163, Val-225 to Asn-245, Trp-252 to Leu-272, and Ala-286 to Leu-306.

This sequence belongs to the CcmF/CycK/Ccl1/NrfE/CcsA family. May interact with Ccs1.

It localises to the plastid. The protein resides in the chloroplast thylakoid membrane. Functionally, required during biogenesis of c-type cytochromes (cytochrome c6 and cytochrome f) at the step of heme attachment. The chain is Cytochrome c biogenesis protein CcsA from Acorus calamus var. americanus (American sweet flag).